Consider the following 392-residue polypeptide: NAD(P)H-quinone oxidoreductase subunit H (392 aa).

The protein belongs to the complex I 49 kDa subunit family. As to quaternary structure, NDH-1 can be composed of about 15 different subunits; different subcomplexes with different compositions have been identified which probably have different functions.

It is found in the cellular thylakoid membrane. The enzyme catalyses a plastoquinone + NADH + (n+1) H(+)(in) = a plastoquinol + NAD(+) + n H(+)(out). It carries out the reaction a plastoquinone + NADPH + (n+1) H(+)(in) = a plastoquinol + NADP(+) + n H(+)(out). Its function is as follows. NDH-1 shuttles electrons from an unknown electron donor, via FMN and iron-sulfur (Fe-S) centers, to quinones in the respiratory and/or the photosynthetic chain. The immediate electron acceptor for the enzyme in this species is believed to be plastoquinone. Couples the redox reaction to proton translocation, and thus conserves the redox energy in a proton gradient. Cyanobacterial NDH-1 also plays a role in inorganic carbon-concentration. This is NAD(P)H-quinone oxidoreductase subunit H from Synechococcus sp. (strain JA-2-3B'a(2-13)) (Cyanobacteria bacterium Yellowstone B-Prime).